The primary structure comprises 325 residues: ATP synthase subunit gamma, mitochondrial (325 aa).

A mitochondrion-targeting transit peptide spans Met1 to Ser42.

This sequence belongs to the ATPase gamma chain family. In terms of assembly, F-type ATPases have 2 components, CF(1) - the catalytic core - and CF(0) - the membrane proton channel. CF(1) has five subunits: alpha(3), beta(3), gamma(1), delta(1), epsilon(1). CF(0) has three main subunits: a, b and c.

Its subcellular location is the mitochondrion. It localises to the mitochondrion inner membrane. Functionally, mitochondrial membrane ATP synthase (F(1)F(0) ATP synthase or Complex V) produces ATP from ADP in the presence of a proton gradient across the membrane which is generated by electron transport complexes of the respiratory chain. F-type ATPases consist of two structural domains, F(1) - containing the extramembraneous catalytic core, and F(0) - containing the membrane proton channel, linked together by a central stalk and a peripheral stalk. During catalysis, ATP synthesis in the catalytic domain of F(1) is coupled via a rotary mechanism of the central stalk subunits to proton translocation. Part of the complex F(1) domain and the central stalk which is part of the complex rotary element. The gamma subunit protrudes into the catalytic domain formed of alpha(3)beta(3). Rotation of the central stalk against the surrounding alpha(3)beta(3) subunits leads to hydrolysis of ATP in three separate catalytic sites on the beta subunits. The sequence is that of ATP synthase subunit gamma, mitochondrial (ATPC) from Arabidopsis thaliana (Mouse-ear cress).